Reading from the N-terminus, the 579-residue chain is L-arabinonate dehydratase (579 aa).

A [2Fe-2S] cluster-binding site is contributed by Cys59. A Mg(2+)-binding site is contributed by Glu91. Cys127 contacts [2Fe-2S] cluster. Asp128 serves as a coordination point for Mg(2+). Cys200 contributes to the [2Fe-2S] cluster binding site. Glu453 contacts Mg(2+).

The protein belongs to the IlvD/Edd family. In terms of assembly, homotetramer. Requires [2Fe-2S] cluster as cofactor. The cofactor is Mg(2+).

The catalysed reaction is L-arabinonate = 2-dehydro-3-deoxy-L-arabinonate + H2O. It catalyses the reaction D-galactonate = 2-dehydro-3-deoxy-D-galactonate + H2O. The enzyme catalyses D-fuconate = 2-dehydro-3-deoxy-D-fuconate + H2O. The protein operates within carbohydrate metabolism. Functionally, catalyzes the dehydration of L-arabinonate to 2-dehydro-3-deoxy-L-arabinonate during L-arabinose degradation. Can also dehydrate D-galactonate and D-fuconate with good catalytic efficiency. Has weak activity with D-xylonate and D-gluconate. This Rhizobium leguminosarum bv. trifolii (strain WSM2304) protein is L-arabinonate dehydratase.